A 67-amino-acid polypeptide reads, in one-letter code: Large ribosomal subunit protein uL30 (67 aa).

It belongs to the universal ribosomal protein uL30 family. In terms of assembly, part of the 50S ribosomal subunit.

The protein is Large ribosomal subunit protein uL30 of Hamiltonella defensa subsp. Acyrthosiphon pisum (strain 5AT).